A 424-amino-acid polypeptide reads, in one-letter code: Gamma-glutamyl phosphate reductase (424 aa).

Belongs to the gamma-glutamyl phosphate reductase family.

It is found in the cytoplasm. The catalysed reaction is L-glutamate 5-semialdehyde + phosphate + NADP(+) = L-glutamyl 5-phosphate + NADPH + H(+). Its pathway is amino-acid biosynthesis; L-proline biosynthesis; L-glutamate 5-semialdehyde from L-glutamate: step 2/2. Its function is as follows. Catalyzes the NADPH-dependent reduction of L-glutamate 5-phosphate into L-glutamate 5-semialdehyde and phosphate. The product spontaneously undergoes cyclization to form 1-pyrroline-5-carboxylate. This chain is Gamma-glutamyl phosphate reductase, found in Shewanella woodyi (strain ATCC 51908 / MS32).